A 611-amino-acid polypeptide reads, in one-letter code: Adenosylhomocysteinase 3 (611 aa).

Low complexity-rich tracts occupy residues 1-14 (MSVQVVSAAAAAKV), 36-57 (AAVGAMAPPAGGGDPEAPAPAA), and 68-81 (GPAAALSPAAGKVP). The disordered stretch occupies residues 1-184 (MSVQVVSAAA…KQQKNSKGSS (184 aa)). Serine 2 is subject to N-acetylserine. An LISN domain, inhibits interaction with ITPR1 region spans residues 2–109 (SVQVVSAAAA…DGGEALVSPD (108 aa)). Residue serine 107 is modified to Phosphoserine. Over residues 135 to 144 (RPTKIGRRSL) the composition is skewed to basic residues. The span at 145 to 164 (SRSISQSSTDSYSSAASYTD) shows a compositional bias: low complexity. Phosphoserine occurs at positions 149, 152, 155, and 158. Residues threonine 236, aspartate 310, and glutamate 335 each coordinate substrate. 336 to 338 (SVT) serves as a coordination point for NAD(+). Substrate-binding residues include lysine 365 and aspartate 369. Residues asparagine 370, 401–406 (GEVGKG), glutamate 422, asparagine 457, 478–479 (MG), and asparagine 525 contribute to the NAD(+) site.

This sequence belongs to the adenosylhomocysteinase family. In terms of assembly, homotetramer. Forms heteromultimers with AHCYL1 (via the C-terminal region). Interacts with ITPR1; with lower affinity than AHCYL1 and maybe via ITPR1. Interacts with SLC4A4. Interacts with ZCCHC4. NAD(+) serves as cofactor. Phosphorylated during neuronal differentiation at the LISN domain.

The protein resides in the cytoplasm. It localises to the microsome. It catalyses the reaction S-adenosyl-L-homocysteine + H2O = L-homocysteine + adenosine. It functions in the pathway amino-acid biosynthesis; L-homocysteine biosynthesis; L-homocysteine from S-adenosyl-L-homocysteine: step 1/1. Functionally, may regulate the electrogenic sodium/bicarbonate cotransporter SLC4A4 activity and Mg(2+)-sensitivity. On the contrary of its homolog AHCYL1, does not regulate ITPR1 sensitivity to inositol 1,4,5-trisphosphate. The sequence is that of Adenosylhomocysteinase 3 (AHCYL2) from Homo sapiens (Human).